A 511-amino-acid chain; its full sequence is MEEHIQIFDTTLRDGEQTPGVNFTFDERLKIAKQLEKWGVDVLEAGFPASSTGSFKSVEAIAKTLTTTAVCGLARCKKSDIDAVYEATKEAVKPQVHVFIATSPIHLEHKLKMTQDEVLTSIKEHVSYAKQFFEVVQFSPEDATRTEIPFLIECVQTAINAGATIINIPDTVGFSYPTEYGEIFKQLTQAVKSNSKIIFSAHCHDDLGMAVANSLAAIEGGARRIEGTVNGIGERAGNASLEEVALALYVRKDHYGLESQINLEETKKTSDLISRYAGIRVPRNKAIVGQNAFSHESGIHQDGVLKHRETYEIMTPQLVGVNTTELPLGKLSGKHAFAEKLKALGYEIKLEDQVTLFKQFKEIADKKKNVSDRDIHAIIHGSEHEHNAIFQLDNLQLQYVSKGLQSAVVVIKERNGQVKQDSSIGTGSIVAIYNAVDRIFKKDAELIDYRIDSVTEGTDAQAEVHVRIIINHIEVTGIGIDHDILKASCKAYIDAHAKYISEYELKEGIRT.

The Pyruvate carboxyltransferase domain occupies 5–267; sequence IQIFDTTLRD…ESQINLEETK (263 aa). Residues Asp-14, His-202, His-204, and Asn-238 each coordinate Mn(2+). The tract at residues 391–511 is regulatory domain; that stretch reads QLDNLQLQYV…EYELKEGIRT (121 aa).

Belongs to the alpha-IPM synthase/homocitrate synthase family. LeuA type 1 subfamily. Homodimer. Requires Mn(2+) as cofactor.

The protein localises to the cytoplasm. It catalyses the reaction 3-methyl-2-oxobutanoate + acetyl-CoA + H2O = (2S)-2-isopropylmalate + CoA + H(+). Its pathway is amino-acid biosynthesis; L-leucine biosynthesis; L-leucine from 3-methyl-2-oxobutanoate: step 1/4. Its function is as follows. Catalyzes the condensation of the acetyl group of acetyl-CoA with 3-methyl-2-oxobutanoate (2-ketoisovalerate) to form 3-carboxy-3-hydroxy-4-methylpentanoate (2-isopropylmalate). The sequence is that of 2-isopropylmalate synthase from Staphylococcus epidermidis (strain ATCC 35984 / DSM 28319 / BCRC 17069 / CCUG 31568 / BM 3577 / RP62A).